The chain runs to 279 residues: PHO85 cyclin-1 (279 aa).

The Cyclin N-terminal domain occupies 19 to 152; the sequence is DIIKFLTDTT…LLQLLNWDLR (134 aa). The tract at residues 29-36 is required for degradation by DMA1; sequence LRVVPSSN. Thr39 carries the post-translational modification Phosphothreonine; by PHO85. Ser43 is subject to Phosphoserine; by PHO85. Glycyl lysine isopeptide (Lys-Gly) (interchain with G-Cter in ubiquitin) cross-links involve residues Lys82 and Lys121.

Belongs to the cyclin family. PCL1,2 subfamily. Forms a cyclin-CDK complex with PHO85. Interacts with HMS1, NCP1 and NPA3. Interacts with DMA1. Post-translationally, phosphorylated by PHO85; necessary for interaction with DMA1 and subsequent degradation. In terms of processing, ubiquitinated by E3 ubiquitin ligase DMA1 in response to nutrient condition; this targets PCL1 for destruction.

Its subcellular location is the cytoplasm. It is found in the nucleus. Its function is as follows. G1/S-specific cyclin partner of the cyclin-dependent kinase (CDK) PHO85. Essential for the control of the cell cycle at the G1/S (start) transition. The PCL1-PHO85 cyclin-CDK holoenzyme is involved in phosphorylation of the CDK inhibitor (CKI) SIC1, which is required for its ubiquitination and degradation, releasing repression of b-type cyclins and promoting exit from mitosis. Together with cyclin PCL2, positively controls degradation of sphingoid long chain base kinase LCB4. PCL1-PHO85 phosphorylates LCB4, which is required for its ubiquitination and degradation. PCL1-PHO85 also phosphorylates HMS1, NCP1 and NPA3, which may all have a role in mitotic exit. The sequence is that of PHO85 cyclin-1 from Saccharomyces cerevisiae (strain ATCC 204508 / S288c) (Baker's yeast).